A 137-amino-acid chain; its full sequence is Basic phospholipase A2 homolog Ts-R6 (137 aa).

An N-terminal signal peptide occupies residues 1–16 (MRTLWIMAVLLLGVEG). 7 disulfides stabilise this stretch: cysteine 42–cysteine 130, cysteine 44–cysteine 60, cysteine 59–cysteine 110, cysteine 65–cysteine 137, cysteine 66–cysteine 103, cysteine 73–cysteine 97, and cysteine 91–cysteine 101.

Expressed by the venom gland.

The protein localises to the secreted. In terms of biological role, snake venom phospholipase A2 homolog that induces local edema a few hours after injection (5-10 ug) in the hind paw and shows weak anticoagulant and myotoxic activities. This is Basic phospholipase A2 homolog Ts-R6 from Trimeresurus stejnegeri (Chinese green tree viper).